A 104-amino-acid chain; its full sequence is MKGNMNNMMKQMQKMQKKMMQAQDELHEMTFEATAGGGMVTVKASGKKEIIDVEIKEEVVDPDDIDMLQDLILAATNDVLNQIDEKTNDTMGQFTKGMNMPGMF.

The disordered stretch occupies residues 1–23; sequence MKGNMNNMMKQMQKMQKKMMQAQ.

This sequence belongs to the YbaB/EbfC family. In terms of assembly, homodimer.

It is found in the cytoplasm. The protein resides in the nucleoid. Binds to DNA and alters its conformation. May be involved in regulation of gene expression, nucleoid organization and DNA protection. The sequence is that of Nucleoid-associated protein OB0030 from Oceanobacillus iheyensis (strain DSM 14371 / CIP 107618 / JCM 11309 / KCTC 3954 / HTE831).